We begin with the raw amino-acid sequence, 395 residues long: Phosphoglycerate kinase (395 aa).

Residues 21-23 (DLN), Arg-36, 59-62 (HLGR), Arg-113, and Arg-146 each bind substrate. Residues Lys-197, Glu-324, and 350-353 (GGDT) contribute to the ATP site.

This sequence belongs to the phosphoglycerate kinase family. Monomer.

The protein resides in the cytoplasm. The catalysed reaction is (2R)-3-phosphoglycerate + ATP = (2R)-3-phospho-glyceroyl phosphate + ADP. It participates in carbohydrate degradation; glycolysis; pyruvate from D-glyceraldehyde 3-phosphate: step 2/5. The chain is Phosphoglycerate kinase from Acinetobacter baumannii (strain ACICU).